A 100-amino-acid polypeptide reads, in one-letter code: Integration host factor subunit alpha (100 aa).

The interval 53–72 is disordered; that stretch reads FDLRDKRQRPGRNPKTGEEI.

This sequence belongs to the bacterial histone-like protein family. As to quaternary structure, heterodimer of an alpha and a beta chain.

Its function is as follows. This protein is one of the two subunits of integration host factor, a specific DNA-binding protein that functions in genetic recombination as well as in transcriptional and translational control. This chain is Integration host factor subunit alpha, found in Stutzerimonas stutzeri (strain A1501) (Pseudomonas stutzeri).